Consider the following 362-residue polypeptide: MSTNSSIQPVSPESELLSNTTCQLEEDLSISFSIIFMTVGILSNSLAIAILMKAYQRFRQKYKSSFLLLASALVITDFFGHLINGTIAVFVYASDKDWIYFDKSNILCSIFGICMVFSGLCPLFLGSLMAIERCIGVTKPIFHSTKITTKHVKMMLSGVCFFAVFVALLPILGHRDYKIQASRTWCFYKTDEIKDWEDRFYLLLFAFLGLLALGISFVCNAITGISLLKVKFRSQQHRQGRSHHFEMVIQLLGIMCVSCICWSPFLVTMASIGMNIQDFKDSCERTLFTLRMATWNQILDPWVYILLRKAVLRNLYVCTRRCCGVHVISLHVWELSSIKDSLKVAAISDLPVTEKVTQQTST.

Residues Met1 to Ser31 are Extracellular-facing. 2 N-linked (GlcNAc...) asparagine glycosylation sites follow: Asn4 and Asn19. A helical membrane pass occupies residues Phe32–Ala54. Residues Tyr55–Leu69 are Cytoplasmic-facing. Residues Ala70–Phe90 traverse the membrane as a helical segment. The Extracellular portion of the chain corresponds to Val91–Ser109. A disulfide bridge links Cys108 with Cys186. A helical transmembrane segment spans residues Ile110–Ile131. Over Glu132–Val152 the chain is Cytoplasmic. Residues Lys153 to Arg175 traverse the membrane as a helical segment. Residues Asp176–Asp198 lie on the Extracellular side of the membrane. Residues Arg199 to Gly224 form a helical membrane-spanning segment. Residues Ile225–Gln250 lie on the Cytoplasmic side of the membrane. The chain crosses the membrane as a helical span at residues Leu251–Val267. At Thr268 to Arg285 the chain is on the extracellular side. Residues Thr286 to Leu307 form a helical membrane-spanning segment. Residues Arg308–Thr362 are Cytoplasmic-facing.

Belongs to the G-protein coupled receptor 1 family.

It is found in the cell membrane. Receptor for prostaglandin F2-alpha (PGF2-alpha). The activity of this receptor is mediated by G proteins which activate a phosphatidylinositol-calcium second messenger system. Initiates luteolysis in the corpus luteum. The sequence is that of Prostaglandin F2-alpha receptor (PTGFR) from Bos taurus (Bovine).